A 276-amino-acid polypeptide reads, in one-letter code: Tryptophan synthase alpha chain (276 aa).

Active-site proton acceptor residues include Glu49 and Asp60.

The protein belongs to the TrpA family. In terms of assembly, tetramer of two alpha and two beta chains.

It carries out the reaction (1S,2R)-1-C-(indol-3-yl)glycerol 3-phosphate + L-serine = D-glyceraldehyde 3-phosphate + L-tryptophan + H2O. The protein operates within amino-acid biosynthesis; L-tryptophan biosynthesis; L-tryptophan from chorismate: step 5/5. Functionally, the alpha subunit is responsible for the aldol cleavage of indoleglycerol phosphate to indole and glyceraldehyde 3-phosphate. This is Tryptophan synthase alpha chain from Corynebacterium aurimucosum (strain ATCC 700975 / DSM 44827 / CIP 107346 / CN-1) (Corynebacterium nigricans).